Consider the following 69-residue polypeptide: DNA gyrase inhibitor YacG (69 aa).

The interval 1 to 28 is disordered; the sequence is MSGEGKKHGSNVEPLRPTRPCPECGRPS. Zn(2+) contacts are provided by C21, C24, C36, and C40.

This sequence belongs to the DNA gyrase inhibitor YacG family. As to quaternary structure, interacts with GyrB. The cofactor is Zn(2+).

In terms of biological role, inhibits all the catalytic activities of DNA gyrase by preventing its interaction with DNA. Acts by binding directly to the C-terminal domain of GyrB, which probably disrupts DNA binding by the gyrase. This chain is DNA gyrase inhibitor YacG, found in Sinorhizobium fredii (strain NBRC 101917 / NGR234).